The chain runs to 444 residues: Phosphoglucosamine mutase (444 aa).

The active-site Phosphoserine intermediate is the Ser-101. Residues Ser-101, Asp-240, Asp-242, and Asp-244 each contribute to the Mg(2+) site. Ser-101 is modified (phosphoserine).

This sequence belongs to the phosphohexose mutase family. Requires Mg(2+) as cofactor. Activated by phosphorylation.

It carries out the reaction alpha-D-glucosamine 1-phosphate = D-glucosamine 6-phosphate. Functionally, catalyzes the conversion of glucosamine-6-phosphate to glucosamine-1-phosphate. The sequence is that of Phosphoglucosamine mutase from Sphingopyxis alaskensis (strain DSM 13593 / LMG 18877 / RB2256) (Sphingomonas alaskensis).